Here is a 287-residue protein sequence, read N- to C-terminus: MPLLKLVFLGTGGAVPRSDRTLPAIYLEDWLGHRFLLDAGEGAQYRLLQIGVSPASLTAVAITHQHEDHTLGLPGLVITSRFLGGRTAVLAPRSMHKALEALGVEVMDSYGGDRLRVSCVEVCHTVDACGWLFQWDVGYKLDLSKAAGLPRWALTSLIRGSPVEVGGRLIKPEDVAEPGHKRLRRLLYTGDTAPCPEMWRKVGEVDVLIHEATFADDVEPQKAHEEGHSTVADAVEAAKALNAGVLILTHVSSRYPDKRRHRELAASVKPPPHVYVPEDFDTVLVRL.

The Zn(2+) site is built by histidine 64, histidine 66, aspartate 68, histidine 69, histidine 124, aspartate 191, and histidine 250. The Proton acceptor role is filled by aspartate 68.

It belongs to the RNase Z family. Homodimer. Zn(2+) is required as a cofactor.

The catalysed reaction is Endonucleolytic cleavage of RNA, removing extra 3' nucleotides from tRNA precursor, generating 3' termini of tRNAs. A 3'-hydroxy group is left at the tRNA terminus and a 5'-phosphoryl group is left at the trailer molecule.. Its function is as follows. Zinc phosphodiesterase, which displays some tRNA 3'-processing endonuclease activity. Probably involved in tRNA maturation, by removing a 3'-trailer from precursor tRNA. The chain is Ribonuclease Z from Pyrobaculum neutrophilum (strain DSM 2338 / JCM 9278 / NBRC 100436 / V24Sta) (Thermoproteus neutrophilus).